Here is a 214-residue protein sequence, read N- to C-terminus: Outer-membrane lipoprotein LolB (214 aa).

The signal sequence occupies residues 1 to 25 (MNNLKRLTKTIFSCFTLSALLLLAG). Residue Cys-26 is the site of N-palmitoyl cysteine attachment. A lipid anchor (S-diacylglycerol cysteine) is attached at Cys-26. Residues 143–160 (QVIESDSQGKPKQLTNTQ) are compositionally biased toward polar residues. Positions 143-163 (QVIESDSQGKPKQLTNTQTPP) are disordered.

Belongs to the LolB family. As to quaternary structure, monomer.

It localises to the cell outer membrane. Plays a critical role in the incorporation of lipoproteins in the outer membrane after they are released by the LolA protein. This is Outer-membrane lipoprotein LolB from Shewanella baltica (strain OS223).